Reading from the N-terminus, the 334-residue chain is Malate dehydrogenase, cytoplasmic (334 aa).

An NAD(+)-binding site is contributed by 11-17; it reads GAAGQIA. Positions 92 and 98 each coordinate substrate. NAD(+)-binding positions include asparagine 105, glutamine 112, and 129–131; that span reads VGN. 2 residues coordinate substrate: asparagine 131 and arginine 162. Residue histidine 187 is the Proton acceptor of the active site.

The protein belongs to the LDH/MDH superfamily. MDH type 2 family. In terms of assembly, homodimer.

The protein resides in the cytoplasm. It is found in the cytosol. The enzyme catalyses (S)-malate + NAD(+) = oxaloacetate + NADH + H(+). The catalysed reaction is (S)-2-hydroxyglutarate + NAD(+) = 2-oxoglutarate + NADH + H(+). Catalyzes the reduction of aromatic alpha-keto acids in the presence of NADH. Plays essential roles in the malate-aspartate shuttle and the tricarboxylic acid cycle, important in mitochondrial NADH supply for oxidative phosphorylation. Catalyzes the reduction of 2-oxoglutarate to 2-hydroxyglutarate, leading to elevated reactive oxygen species (ROS). The protein is Malate dehydrogenase, cytoplasmic (MDH1) of Gallus gallus (Chicken).